The sequence spans 105 residues: Large ribosomal subunit protein bL21 (105 aa).

It belongs to the bacterial ribosomal protein bL21 family. As to quaternary structure, part of the 50S ribosomal subunit. Contacts protein L20.

This protein binds to 23S rRNA in the presence of protein L20. The protein is Large ribosomal subunit protein bL21 of Porphyromonas gingivalis (strain ATCC BAA-308 / W83).